A 401-amino-acid polypeptide reads, in one-letter code: Elongation factor Tu 2 (401 aa).

The region spanning K10–V209 is the tr-type G domain. The tract at residues G19–T26 is G1. A GTP-binding site is contributed by G19–T26. T26 is a Mg(2+) binding site. The segment at G60–A64 is G2. Positions D81–G84 are G3. GTP-binding positions include D81–H85 and N136–D139. The segment at N136–D139 is G4. Residues S174 to L176 are G5.

It belongs to the TRAFAC class translation factor GTPase superfamily. Classic translation factor GTPase family. EF-Tu/EF-1A subfamily. In terms of assembly, monomer.

The protein localises to the cytoplasm. It catalyses the reaction GTP + H2O = GDP + phosphate + H(+). GTP hydrolase that promotes the GTP-dependent binding of aminoacyl-tRNA to the A-site of ribosomes during protein biosynthesis. The protein is Elongation factor Tu 2 of Roseiflexus sp. (strain RS-1).